The chain runs to 41 residues: Large ribosomal subunit protein bL36 (41 aa).

It belongs to the bacterial ribosomal protein bL36 family.

The polypeptide is Large ribosomal subunit protein bL36 (Rhodopseudomonas palustris (strain HaA2)).